The primary structure comprises 65 residues: Alpha-toxin Bot11 (65 aa).

Residues 2-64 (KDGYIVDDRN…VRTVQAGRCR (63 aa)) enclose the LCN-type CS-alpha/beta domain. 4 disulfides stabilise this stretch: C12–C63, C16–C36, C22–C46, and C26–C48.

This sequence belongs to the long (4 C-C) scorpion toxin superfamily. Sodium channel inhibitor family. Alpha subfamily. As to expression, expressed by the venom gland.

The protein localises to the secreted. Functionally, alpha toxins bind voltage-independently at site-3 of sodium channels (Nav) and inhibit the inactivation of the activated channels, thereby blocking neuronal transmission. This chain is Alpha-toxin Bot11, found in Buthus occitanus tunetanus (Common European scorpion).